The chain runs to 93 residues: UPF0358 protein BBR47_22520 (93 aa).

This sequence belongs to the UPF0358 family.

The polypeptide is UPF0358 protein BBR47_22520 (Brevibacillus brevis (strain 47 / JCM 6285 / NBRC 100599)).